The sequence spans 339 residues: Fructose-1,6-bisphosphatase, cytosolic (339 aa).

Glutamate 71, glutamate 100, aspartate 121, leucine 123, and aspartate 124 together coordinate Mg(2+). Substrate contacts are provided by residues 124 to 127 (DGSS), asparagine 215, tyrosine 247, tyrosine 267, and lysine 277. Glutamate 283 is a Mg(2+) binding site.

The protein belongs to the FBPase class 1 family. The cofactor is Mg(2+).

It is found in the cytoplasm. It catalyses the reaction beta-D-fructose 1,6-bisphosphate + H2O = beta-D-fructose 6-phosphate + phosphate. The polypeptide is Fructose-1,6-bisphosphatase, cytosolic (Oryza sativa subsp. indica (Rice)).